A 179-amino-acid polypeptide reads, in one-letter code: Large ribosomal subunit protein uL5 (179 aa).

Belongs to the universal ribosomal protein uL5 family. In terms of assembly, part of the 50S ribosomal subunit; part of the 5S rRNA/L5/L18/L25 subcomplex. Contacts the 5S rRNA and the P site tRNA. Forms a bridge to the 30S subunit in the 70S ribosome.

Its function is as follows. This is one of the proteins that bind and probably mediate the attachment of the 5S RNA into the large ribosomal subunit, where it forms part of the central protuberance. In the 70S ribosome it contacts protein S13 of the 30S subunit (bridge B1b), connecting the 2 subunits; this bridge is implicated in subunit movement. Contacts the P site tRNA; the 5S rRNA and some of its associated proteins might help stabilize positioning of ribosome-bound tRNAs. This chain is Large ribosomal subunit protein uL5, found in Bordetella avium (strain 197N).